The primary structure comprises 406 residues: RING finger protein PSH1 (406 aa).

The segment at 30-72 (CSICHDYMFVPMMTPCGHNYCYGCLNTWFASNTQKELACPQCR) adopts an RING-type zinc-finger fold. A phosphoserine mark is found at Ser143 and Ser191. The disordered stretch occupies residues 209 to 406 (RFASTNPFAN…RVVLGDSDDE (198 aa)). Composition is skewed to acidic residues over residues 223–232 (SSEDDDSSEE), 256–274 (AVDDEDDEEEDEEEEEEMD), and 281–291 (IEDDEDDEDED). Thr310 bears the Phosphothreonine mark. Ser403 is modified (phosphoserine).

In terms of assembly, interacts with POB3 and SPT16.

Its subcellular location is the nucleus. This chain is RING finger protein PSH1 (PSH1), found in Saccharomyces cerevisiae (strain ATCC 204508 / S288c) (Baker's yeast).